The primary structure comprises 382 residues: Dodecanoyl-[acyl-carrier-protein] hydrolase, chloroplastic (382 aa).

A chloroplast-targeting transit peptide spans M1–N83. Active-site residues include N283, H285, and C320.

Belongs to the acyl-ACP thioesterase family. As to quaternary structure, forms homodimers. As to expression, expressed in developing cotyledons. Not detected in leaves.

It is found in the plastid. The protein localises to the chloroplast. It catalyses the reaction dodecanoyl-[ACP] + H2O = dodecanoate + holo-[ACP] + H(+). Plays an essential role in chain termination during de novo fatty acid synthesis. High thioesterase activity for lauroyl-ACP versus other acyl-ACPs. The polypeptide is Dodecanoyl-[acyl-carrier-protein] hydrolase, chloroplastic (Umbellularia californica (California bay laurel)).